Here is a 253-residue protein sequence, read N- to C-terminus: Sulfur carrier protein FdhD (253 aa).

The active-site Cysteine persulfide intermediate is Cys100.

This sequence belongs to the FdhD family.

The protein resides in the cytoplasm. Required for formate dehydrogenase (FDH) activity. Acts as a sulfur carrier protein that transfers sulfur from IscS to the molybdenum cofactor prior to its insertion into FDH. The polypeptide is Sulfur carrier protein FdhD (Sulfolobus acidocaldarius (strain ATCC 33909 / DSM 639 / JCM 8929 / NBRC 15157 / NCIMB 11770)).